The sequence spans 430 residues: MASPVPIQRLQAPLRRSLARAAALSTRSYATIPSGPSSQPTSQESSSAASASAPATKPRPTYFKDTTLASLDDFIANQSSAAPLAPSEAYTLRTAEVGPAGKKRTITRLPEWLKTPIPSAGANPEFAKIKADLRGLNLHTVCEEARCPNIGECWGGSNKAAATATIMLMGDTCTRGCRFCSVKTSRKPPPLDPHEPENTAEALARWGLGYVVLTSVDRDDLADGGARHFAETIRRIKQKKPTLLVEALTGDFAGDLDMVKIVAESGLDVYAHNVETVENLTPYVRDRRATFRQSLKVLEHVKKVRGKEGIITKTSIMLGLGETEEELWEALRELRKVDVDVVTFGQYMRPTKRHLAVEKYITPDEFELWRQRALDMGFLYCASGPLVRSSYKAGEAFIENVLRKRSGEKVVSEALGQAVAAEEATSVQSS.

Residues 1–29 (MASPVPIQRLQAPLRRSLARAAALSTRSY) constitute a mitochondrion transit peptide. A compositionally biased stretch (low complexity) spans 28 to 58 (SYATIPSGPSSQPTSQESSSAASASAPATKP). A disordered region spans residues 28 to 62 (SYATIPSGPSSQPTSQESSSAASASAPATKPRPTY). Positions 142, 147, 153, 173, 177, 180, and 390 each coordinate [4Fe-4S] cluster. The Radical SAM core domain occupies 156–379 (GSNKAAATAT…RQRALDMGFL (224 aa)).

The protein belongs to the radical SAM superfamily. Lipoyl synthase family. Requires [4Fe-4S] cluster as cofactor.

The protein resides in the mitochondrion. The enzyme catalyses [[Fe-S] cluster scaffold protein carrying a second [4Fe-4S](2+) cluster] + N(6)-octanoyl-L-lysyl-[protein] + 2 oxidized [2Fe-2S]-[ferredoxin] + 2 S-adenosyl-L-methionine + 4 H(+) = [[Fe-S] cluster scaffold protein] + N(6)-[(R)-dihydrolipoyl]-L-lysyl-[protein] + 4 Fe(3+) + 2 hydrogen sulfide + 2 5'-deoxyadenosine + 2 L-methionine + 2 reduced [2Fe-2S]-[ferredoxin]. It participates in protein modification; protein lipoylation via endogenous pathway; protein N(6)-(lipoyl)lysine from octanoyl-[acyl-carrier-protein]: step 2/2. Catalyzes the radical-mediated insertion of two sulfur atoms into the C-6 and C-8 positions of the octanoyl moiety bound to the lipoyl domains of lipoate-dependent enzymes, thereby converting the octanoylated domains into lipoylated derivatives. The polypeptide is Lipoyl synthase, mitochondrial (Neurospora crassa (strain ATCC 24698 / 74-OR23-1A / CBS 708.71 / DSM 1257 / FGSC 987)).